Reading from the N-terminus, the 792-residue chain is G-type lectin S-receptor-like serine/threonine-protein kinase At1g61440 (792 aa).

A signal peptide spans Met1–Ala17. In terms of domain architecture, Bulb-type lectin spans Glu18–Phe137. The Extracellular portion of the chain corresponds to Glu18 to Thr419. 3 N-linked (GlcNAc...) asparagine glycosylation sites follow: Asn46, Asn127, and Asn229. The EGF-like; atypical domain maps to Pro271 to Glu307. 2 disulfides stabilise this stretch: Cys275–Cys287 and Cys281–Cys295. 3 N-linked (GlcNAc...) asparagine glycosylation sites follow: Asn313, Asn329, and Asn368. In terms of domain architecture, PAN spans Cys326–His408. 2 disulfides stabilise this stretch: Cys361–Cys382 and Cys365–Cys371. Residues Ile420 to Phe440 form a helical membrane-spanning segment. The Cytoplasmic segment spans residues Trp441–Arg792. Positions Phe478–Phe763 constitute a Protein kinase domain. ATP is bound by residues Leu484–Val492 and Lys506. 2 positions are modified to phosphoserine: Ser512 and Ser527. Residues Arg567–Ile584 are caM-binding. Asp603 functions as the Proton acceptor in the catalytic mechanism. 2 positions are modified to phosphoserine: Ser607 and Ser620. Thr637 bears the Phosphothreonine mark. Phosphoserine occurs at positions 680 and 774.

It belongs to the protein kinase superfamily. Ser/Thr protein kinase family.

It localises to the cell membrane. The catalysed reaction is L-seryl-[protein] + ATP = O-phospho-L-seryl-[protein] + ADP + H(+). It carries out the reaction L-threonyl-[protein] + ATP = O-phospho-L-threonyl-[protein] + ADP + H(+). This chain is G-type lectin S-receptor-like serine/threonine-protein kinase At1g61440, found in Arabidopsis thaliana (Mouse-ear cress).